We begin with the raw amino-acid sequence, 134 residues long: Large ribosomal subunit protein bL20 (134 aa).

The protein belongs to the bacterial ribosomal protein bL20 family.

In terms of biological role, binds directly to 23S ribosomal RNA and is necessary for the in vitro assembly process of the 50S ribosomal subunit. It is not involved in the protein synthesizing functions of that subunit. The sequence is that of Large ribosomal subunit protein bL20 from Rhizobium rhizogenes (strain K84 / ATCC BAA-868) (Agrobacterium radiobacter).